We begin with the raw amino-acid sequence, 504 residues long: ATP synthase subunit alpha (504 aa).

ATP is bound at residue 172 to 179; that stretch reads GDRQTGKT.

Belongs to the ATPase alpha/beta chains family. As to quaternary structure, F-type ATPases have 2 components, CF(1) - the catalytic core - and CF(0) - the membrane proton channel. CF(1) has five subunits: alpha(3), beta(3), gamma(1), delta(1), epsilon(1). CF(0) has three main subunits: a(1), b(2) and c(9-12). The alpha and beta chains form an alternating ring which encloses part of the gamma chain. CF(1) is attached to CF(0) by a central stalk formed by the gamma and epsilon chains, while a peripheral stalk is formed by the delta and b chains.

The protein resides in the cell inner membrane. The enzyme catalyses ATP + H2O + 4 H(+)(in) = ADP + phosphate + 5 H(+)(out). Produces ATP from ADP in the presence of a proton gradient across the membrane. The alpha chain is a regulatory subunit. This is ATP synthase subunit alpha from Petrotoga mobilis (strain DSM 10674 / SJ95).